The primary structure comprises 465 residues: Trigger factor (465 aa).

The PPIase FKBP-type domain occupies 160–235; it reads ADQVTIQELG…VVEVSSKKLQ (76 aa). Residues 412–465 are disordered; the sequence is QLSGEGQSTEAASPKATGTEAAGTEQSEPAQTETAQNDAGQTETAQSEGEQQSE. The segment covering 435 to 465 has biased composition (polar residues); sequence TEQSEPAQTETAQNDAGQTETAQSEGEQQSE.

This sequence belongs to the FKBP-type PPIase family. Tig subfamily. Binds to the 50S ribosomal subunit via interactions with ribosomal protein L23. Also interacts with 23S rRNA and proteins L24 and L29 when complexed with the ribosome.

The protein resides in the cytoplasm. It carries out the reaction [protein]-peptidylproline (omega=180) = [protein]-peptidylproline (omega=0). Its function is as follows. Involved in protein export. Acts as a chaperone by maintaining the newly synthesized protein in an open conformation. Functions as a peptidyl-prolyl cis-trans isomerase. Probably changes conformation upon binding to the ribosome (maybe in particular due to interaction with L24), exposing a hydrophobic crevice that is probably important for its chaperone activity. The chain is Trigger factor (tig) from Deinococcus radiodurans (strain ATCC 13939 / DSM 20539 / JCM 16871 / CCUG 27074 / LMG 4051 / NBRC 15346 / NCIMB 9279 / VKM B-1422 / R1).